A 160-amino-acid polypeptide reads, in one-letter code: Cytochrome b6-f complex subunit 4 (160 aa).

3 helical membrane passes run 36–56 (LLYI…GLSV), 95–115 (LLGI…PFIE), and 128–148 (IAMA…IGAA).

It belongs to the cytochrome b family. PetD subfamily. In terms of assembly, the 4 large subunits of the cytochrome b6-f complex are cytochrome b6, subunit IV (17 kDa polypeptide, PetD), cytochrome f and the Rieske protein, while the 4 small subunits are PetG, PetL, PetM and PetN. The complex functions as a dimer.

It localises to the cellular thylakoid membrane. Functionally, component of the cytochrome b6-f complex, which mediates electron transfer between photosystem II (PSII) and photosystem I (PSI), cyclic electron flow around PSI, and state transitions. This is Cytochrome b6-f complex subunit 4 from Synechococcus sp. (strain CC9311).